The following is a 538-amino-acid chain: CTP synthase (538 aa).

Residues 1 to 265 (MARYIFVTGG…DLQVLNYFKL (265 aa)) are amidoligase domain. S13 is a CTP binding site. Residue S13 participates in UTP binding. ATP is bound by residues 14–19 (SLGKGL) and D71. Mg(2+) contacts are provided by D71 and E139. Residues 146–148 (DIE), 186–191 (KTKPTQ), and K222 each bind CTP. Residues 186–191 (KTKPTQ) and K222 each bind UTP. The Glutamine amidotransferase type-1 domain occupies 291–538 (NIAIIGKYVE…SFIKAAKNHK (248 aa)). An L-glutamine-binding site is contributed by G353. C380 functions as the Nucleophile; for glutamine hydrolysis in the catalytic mechanism. L-glutamine is bound by residues 381–384 (YGMQ), E404, and R468. Catalysis depends on residues H513 and E515.

This sequence belongs to the CTP synthase family. Homotetramer.

It catalyses the reaction UTP + L-glutamine + ATP + H2O = CTP + L-glutamate + ADP + phosphate + 2 H(+). The catalysed reaction is L-glutamine + H2O = L-glutamate + NH4(+). The enzyme catalyses UTP + NH4(+) + ATP = CTP + ADP + phosphate + 2 H(+). The protein operates within pyrimidine metabolism; CTP biosynthesis via de novo pathway; CTP from UDP: step 2/2. With respect to regulation, allosterically activated by GTP, when glutamine is the substrate; GTP has no effect on the reaction when ammonia is the substrate. The allosteric effector GTP functions by stabilizing the protein conformation that binds the tetrahedral intermediate(s) formed during glutamine hydrolysis. Inhibited by the product CTP, via allosteric rather than competitive inhibition. Its function is as follows. Catalyzes the ATP-dependent amination of UTP to CTP with either L-glutamine or ammonia as the source of nitrogen. Regulates intracellular CTP levels through interactions with the four ribonucleotide triphosphates. This chain is CTP synthase, found in Pelagibacter ubique (strain HTCC1062).